A 267-amino-acid polypeptide reads, in one-letter code: Small ribosomal subunit protein uS2c (267 aa).

The interval 237-267 is disordered; the sequence is KQKIKKTGVKISGNRRTSSITKKRNPASSKI. The span at 250–267 shows a compositional bias: polar residues; sequence NRRTSSITKKRNPASSKI.

The protein belongs to the universal ribosomal protein uS2 family.

The protein localises to the plastid. It is found in the chloroplast. The polypeptide is Small ribosomal subunit protein uS2c (rps2) (Chlorella vulgaris (Green alga)).